The primary structure comprises 578 residues: Aspartate--tRNA ligase (578 aa).

E169 is an L-aspartate binding site. The interval 191 to 194 (QTFK) is aspartate. Residue R213 participates in L-aspartate binding. Residues 213-215 (RDE) and Q222 each bind ATP. H440 is an L-aspartate binding site. E474 is an ATP binding site. R481 lines the L-aspartate pocket. 526–529 (GLDR) lines the ATP pocket.

The protein belongs to the class-II aminoacyl-tRNA synthetase family. Type 1 subfamily. Homodimer.

Its subcellular location is the cytoplasm. The catalysed reaction is tRNA(Asp) + L-aspartate + ATP = L-aspartyl-tRNA(Asp) + AMP + diphosphate. Its function is as follows. Catalyzes the attachment of L-aspartate to tRNA(Asp) in a two-step reaction: L-aspartate is first activated by ATP to form Asp-AMP and then transferred to the acceptor end of tRNA(Asp). In Ureaplasma parvum serovar 3 (strain ATCC 700970), this protein is Aspartate--tRNA ligase.